The primary structure comprises 188 residues: Elongation factor P (188 aa).

Residue Lys-34 is modified to N6-(3,6-diaminohexanoyl)-5-hydroxylysine.

Belongs to the elongation factor P family. Post-translationally, may be beta-lysylated on the epsilon-amino group of Lys-34 by the combined action of EpmA and EpmB, and then hydroxylated on the C5 position of the same residue by EpmC (if this protein is present). Lysylation is critical for the stimulatory effect of EF-P on peptide-bond formation. The lysylation moiety may extend toward the peptidyltransferase center and stabilize the terminal 3-CCA end of the tRNA. Hydroxylation of the C5 position on Lys-34 may allow additional potential stabilizing hydrogen-bond interactions with the P-tRNA.

The protein localises to the cytoplasm. It participates in protein biosynthesis; polypeptide chain elongation. Its function is as follows. Involved in peptide bond synthesis. Alleviates ribosome stalling that occurs when 3 or more consecutive Pro residues or the sequence PPG is present in a protein, possibly by augmenting the peptidyl transferase activity of the ribosome. Modification of Lys-34 is required for alleviation. This chain is Elongation factor P, found in Photorhabdus laumondii subsp. laumondii (strain DSM 15139 / CIP 105565 / TT01) (Photorhabdus luminescens subsp. laumondii).